A 505-amino-acid polypeptide reads, in one-letter code: Maturase K (505 aa).

The protein belongs to the intron maturase 2 family. MatK subfamily.

Its subcellular location is the plastid. The protein resides in the chloroplast. Its function is as follows. Usually encoded in the trnK tRNA gene intron. Probably assists in splicing its own and other chloroplast group II introns. The polypeptide is Maturase K (Gomphrena pulchella (Globe amaranth)).